The sequence spans 221 residues: Ribonuclease 3 (221 aa).

The RNase III domain occupies 4 to 121 (LEQLEKKLGY…LWAAVYIDSG (118 aa)). Residue Glu40 coordinates Mg(2+). The active site involves Asp44. Mg(2+)-binding residues include Asp107 and Glu110. Glu110 is an active-site residue. The DRBM domain maps to 151–219 (DYKTILQEIT…AEELIKLLEE (69 aa)).

This sequence belongs to the ribonuclease III family. As to quaternary structure, homodimer. The cofactor is Mg(2+).

The protein localises to the cytoplasm. It carries out the reaction Endonucleolytic cleavage to 5'-phosphomonoester.. Its function is as follows. Digests double-stranded RNA. Involved in the processing of primary rRNA transcript to yield the immediate precursors to the large and small rRNAs (23S and 16S). Also processes some mRNAs, and tRNAs when they are encoded in the rRNA operon. Probably processes pre-crRNA and tracrRNA of type II CRISPR loci if present in the organism. In Aquifex aeolicus (strain VF5), this protein is Ribonuclease 3 (rnc).